A 603-amino-acid chain; its full sequence is Chaperone protein DnaK (603 aa).

At threonine 175 the chain carries Phosphothreonine; by autocatalysis. The span at 573–586 (AQQAQQQNPDNQNN) shows a compositional bias: low complexity. A disordered region spans residues 573 to 603 (AQQAQQQNPDNQNNNKDDVTEATVTDDSTKK). Positions 594-603 (ATVTDDSTKK) are enriched in polar residues.

This sequence belongs to the heat shock protein 70 family.

In terms of biological role, acts as a chaperone. The polypeptide is Chaperone protein DnaK (Ureaplasma parvum serovar 3 (strain ATCC 27815 / 27 / NCTC 11736)).